The primary structure comprises 389 residues: GTPase Obg (389 aa).

In terms of domain architecture, Obg spans 1-159; it reads MKFVDEAVIR…RSLKLELLLL (159 aa). In terms of domain architecture, OBG-type G spans 160–333; sequence ADVGLLGMPN…LALKLLDYIA (174 aa). Residues 166-173, 191-195, 213-216, 283-286, and 314-316 contribute to the GTP site; these read GMPNAGKS, FTTLV, DIPG, NKTD, and SAY. Mg(2+)-binding residues include Ser173 and Thr193.

This sequence belongs to the TRAFAC class OBG-HflX-like GTPase superfamily. OBG GTPase family. As to quaternary structure, monomer. Mg(2+) serves as cofactor.

The protein localises to the cytoplasm. Its function is as follows. An essential GTPase which binds GTP, GDP and possibly (p)ppGpp with moderate affinity, with high nucleotide exchange rates and a fairly low GTP hydrolysis rate. Plays a role in control of the cell cycle, stress response, ribosome biogenesis and in those bacteria that undergo differentiation, in morphogenesis control. This chain is GTPase Obg, found in Shewanella baltica (strain OS223).